Here is a 437-residue protein sequence, read N- to C-terminus: Sodium/bile acid cotransporter 4 (437 aa).

The Extracellular segment spans residues 1–103 (MDGLDNTTRL…PPFWDTPLNH (103 aa)). Residues Asn6, Asn20, and Asn26 are each glycosylated (N-linked (GlcNAc...) asparagine). Residues 16–84 (LLPDNLTLSP…GGVAGQDSST (69 aa)) are disordered. Positions 21–50 (LTLSPNASSTSASTLSPLPVTSSPSPGLSL) are enriched in low complexity. The chain crosses the membrane as a helical span at residues 104-124 (GLNVFVGAALCITMLGLGCTV). At 125–140 (DVNHFGAHVRRPVGAL) the chain is on the cytoplasmic side. A helical membrane pass occupies residues 141 to 161 (LAALCQFGFLPLLAFLLALAF). The Extracellular segment spans residues 162–197 (KLDEVAAVAVLLCGCCPGGNLSNLMSLLVDGDMNLS). N-linked (GlcNAc...) asparagine glycans are attached at residues Asn181 and Asn195. The chain crosses the membrane as a helical span at residues 198–218 (IIMTISSTLLALVLMPLCLWI). At 219–233 (YSRAWINTPLVQLLP) the chain is on the cytoplasmic side. Residues 234–254 (LGAVTLTLCSTLIPIGLGVFI) traverse the membrane as a helical segment. Residues 255–267 (RYKYNRVADYIVK) lie on the Extracellular side of the membrane. A helical transmembrane segment spans residues 268 to 288 (VSLCSLLVTLVVLFIMTGTML). Residues 289–291 (GPE) are Cytoplasmic-facing. Residues 292-312 (LLASIPAAVYVVAIFMPLAGY) form a helical membrane-spanning segment. At 313–360 (ASGYGLATLFHLPPNCKRTVCLETGSQNVQLCTAILKLAFPPRFIGSM) the chain is on the extracellular side. The helical transmembrane segment at 361-381 (YMFPLLYALFQSAEAGVFVLI) threads the bilayer. Topologically, residues 382–437 (YKMYGSEILHKREALDEDDDTDISYKKLKEEELADTSYGTVGTDDLVLMETTQTSL) are cytoplasmic.

The protein belongs to the bile acid:sodium symporter (BASS) (TC 2.A.28) family. Activated following N-terminal proteolytic cleavage by thrombin and/or proteases. In terms of tissue distribution, mainly expressed in the central nervous system cholinergic neurons. Expressed (at protein level) in motor regions of the spinal cord and rhombencephalon, in mesopontine cholinergic neurons, the medial habenula, cholinergic areas of the forebrain, and the gut myenteric plexus.

The protein localises to the cell membrane. Transporter for bile acids. The chain is Sodium/bile acid cotransporter 4 (Slc10a4) from Rattus norvegicus (Rat).